The chain runs to 170 residues: Large ribosomal subunit protein uL10 (170 aa).

Belongs to the universal ribosomal protein uL10 family. As to quaternary structure, part of the ribosomal stalk of the 50S ribosomal subunit. The N-terminus interacts with L11 and the large rRNA to form the base of the stalk. The C-terminus forms an elongated spine to which L12 dimers bind in a sequential fashion forming a multimeric L10(L12)X complex.

In terms of biological role, forms part of the ribosomal stalk, playing a central role in the interaction of the ribosome with GTP-bound translation factors. The protein is Large ribosomal subunit protein uL10 of Lactobacillus acidophilus (strain ATCC 700396 / NCK56 / N2 / NCFM).